Consider the following 287-residue polypeptide: Type 1 encapsulin shell protein EncA (287 aa).

It belongs to the encapsulin family. Family 1 subfamily. As to quaternary structure, the 32 nm encapsulin nanocompartment is formed by 180 subunits; monomers form pentamers which assemble to form shells. There are 36 pores where the pentamers meet as well as 3-fold axis channels and dimer channels. The N-terminus of the protein is inside the shell.

Its subcellular location is the encapsulin nanocompartment. In terms of biological role, shell component of a type 1, iron-storage encapsulin nanocompartment. Encapsulin nanocompartments are 32 nm in diameter with an iron- and phosphorus-rich core (4Fe:1P) about 24 nm in diameter. Upon expression in E.coli most particles are 32 nm, 20% are 18 nm. The core is filled with an average of 14 dense granules, 5-6 nm in diameter that are not evenly distributed. Each nanocompartment is estimated to hold 30,000-35,000 Fe atoms. The minor proteins EncB, EncC and EncD probably lie against the interior face of the nanocompartment. This Myxococcus xanthus (strain DK1622) protein is Type 1 encapsulin shell protein EncA.